The primary structure comprises 255 residues: Sorbose reductase sou1 (255 aa).

2 residues coordinate NADP(+): Ile21 and Asn95. Catalysis depends on proton donor residues Ser148 and Tyr163. Tyr163, Lys167, Ile195, and Thr197 together coordinate NADP(+). Lys167 functions as the Lowers pKa of active site Tyr in the catalytic mechanism.

Belongs to the short-chain dehydrogenases/reductases (SDR) family.

It carries out the reaction D-sorbitol + NADP(+) = keto-L-sorbose + NADPH + H(+). Functionally, catalyzes the NADP dependent reduction of L-sorbose to D-glucitol. This chain is Sorbose reductase sou1 (sou1), found in Schizosaccharomyces pombe (strain 972 / ATCC 24843) (Fission yeast).